Reading from the N-terminus, the 413-residue chain is Multifunctional CCA protein (413 aa).

Residues G8 and R11 each contribute to the ATP site. The CTP site is built by G8 and R11. Mg(2+)-binding residues include D21 and D23. The ATP site is built by R91, R137, and R140. R91, R137, and R140 together coordinate CTP. Residues 228 to 329 form the HD domain; that stretch reads TGLHTLMTVT…VKLFDSIDAW (102 aa).

This sequence belongs to the tRNA nucleotidyltransferase/poly(A) polymerase family. Bacterial CCA-adding enzyme type 1 subfamily. As to quaternary structure, monomer. Can also form homodimers and oligomers. The cofactor is Mg(2+). Ni(2+) is required as a cofactor.

It carries out the reaction a tRNA precursor + 2 CTP + ATP = a tRNA with a 3' CCA end + 3 diphosphate. It catalyses the reaction a tRNA with a 3' CCA end + 2 CTP + ATP = a tRNA with a 3' CCACCA end + 3 diphosphate. In terms of biological role, catalyzes the addition and repair of the essential 3'-terminal CCA sequence in tRNAs without using a nucleic acid template. Adds these three nucleotides in the order of C, C, and A to the tRNA nucleotide-73, using CTP and ATP as substrates and producing inorganic pyrophosphate. tRNA 3'-terminal CCA addition is required both for tRNA processing and repair. Also involved in tRNA surveillance by mediating tandem CCA addition to generate a CCACCA at the 3' terminus of unstable tRNAs. While stable tRNAs receive only 3'-terminal CCA, unstable tRNAs are marked with CCACCA and rapidly degraded. The sequence is that of Multifunctional CCA protein from Klebsiella pneumoniae (strain 342).